The chain runs to 348 residues: Histidinol-phosphate aminotransferase (348 aa).

Lysine 211 is modified (N6-(pyridoxal phosphate)lysine).

This sequence belongs to the class-II pyridoxal-phosphate-dependent aminotransferase family. Histidinol-phosphate aminotransferase subfamily. As to quaternary structure, homodimer. It depends on pyridoxal 5'-phosphate as a cofactor.

It carries out the reaction L-histidinol phosphate + 2-oxoglutarate = 3-(imidazol-4-yl)-2-oxopropyl phosphate + L-glutamate. It participates in amino-acid biosynthesis; L-histidine biosynthesis; L-histidine from 5-phospho-alpha-D-ribose 1-diphosphate: step 7/9. This Pseudomonas entomophila (strain L48) protein is Histidinol-phosphate aminotransferase.